Consider the following 947-residue polypeptide: Cell adhesion molecule CEACAM5 (947 aa).

Positions 1 to 34 (MEASSVLPCKWCTHLQGLLLTASFLTCCHLPTTA) are cleaved as a signal peptide. Ig-like V-type domains are found at residues 35–132 (QITI…EIVS), 166–259 (SEGG…VQLY), 270–378 (PLQV…LHVN), 392–498 (RLSI…LQLD), 509–615 (QVKI…LHVN), 642–733 (GESV…VQLQ), and 746–851 (DQLI…VQVH). Asn57, Asn103, Asn110, Asn207, Asn224, Asn341, Asn461, Asn472, Asn578, Asn698, Asn709, Asn816, and Asn823 each carry an N-linked (GlcNAc...) asparagine glycan. The Ig-like C2-type 1 domain occupies 859-943 (PFVRVTDTTV…SKSSLPVRLA (85 aa)). The cysteines at positions 878 and 926 are disulfide-linked.

Belongs to the immunoglobulin superfamily. CEA family. Homodimer.

Its subcellular location is the cell membrane. It is found in the apical cell membrane. It localises to the cell surface. Its function is as follows. Cell surface glycoprotein that plays a role in cell adhesion, intracellular signaling and tumor progression. Mediates homophilic and heterophilic cell adhesion with other carcinoembryonic antigen-related cell adhesion molecules, such as CEACAM6. Plays a role as an oncogene by promoting tumor progression; induces resistance to anoikis of colorectal carcinoma cells. In Mus musculus (Mouse), this protein is Cell adhesion molecule CEACAM5.